A 325-amino-acid polypeptide reads, in one-letter code: Tetraacyldisaccharide 4'-kinase (325 aa).

ATP is bound at residue 55-62; that stretch reads TAGGNGKT.

The protein belongs to the LpxK family.

It carries out the reaction a lipid A disaccharide + ATP = a lipid IVA + ADP + H(+). It participates in glycolipid biosynthesis; lipid IV(A) biosynthesis; lipid IV(A) from (3R)-3-hydroxytetradecanoyl-[acyl-carrier-protein] and UDP-N-acetyl-alpha-D-glucosamine: step 6/6. In terms of biological role, transfers the gamma-phosphate of ATP to the 4'-position of a tetraacyldisaccharide 1-phosphate intermediate (termed DS-1-P) to form tetraacyldisaccharide 1,4'-bis-phosphate (lipid IVA). The protein is Tetraacyldisaccharide 4'-kinase of Salmonella enteritidis PT4 (strain P125109).